Reading from the N-terminus, the 99-residue chain is MNKTELIKAIAQDTELTQVSVSKMLASFEKITTETVAKGDKVQLTGFLNIKPVARQARKGFNPQTQEALEIAPSVGVSVKPGESLKKAAEGLKYEDFAK.

2 may be involved in preference for HM-URA DNA regions span residues 52–77 (PVARQARKGFNPQTQEALEIAPSVGV) and 90–99 (EGLKYEDFAK). 2 consecutive DNA-binding regions follow at residues Phe61 and 93 to 94 (KY).

Belongs to the bacterial histone-like protein family. In terms of assembly, homodimer.

Functionally, selectively binds to and inhibits the transcription of hydroxymethyluracil-(hmUra)-containing DNA, such as SP01 DNA, by RNA polymerase in vitro. The sequence is that of Transcription factor 1 (TF1) from Bacillus phage SP01 (Bacteriophage SP01).